A 369-amino-acid chain; its full sequence is Tyrosine-protein phosphatase non-receptor type 5 (369 aa).

Ser-49 carries the post-translational modification Phosphoserine; by PKA. Thr-59 is modified (phosphothreonine; by MAPK). Ser-72 carries the post-translational modification Phosphoserine; by MAPK. One can recognise a Tyrosine-protein phosphatase domain in the interval 104–359; it reads LQAEFFEIPM…QFVHHAMSLY (256 aa). Residues Asp-265, 300–306, and Gln-344 contribute to the substrate site; that span reads CSAGIGR. Cys-300 functions as the Phosphocysteine intermediate in the catalytic mechanism.

This sequence belongs to the protein-tyrosine phosphatase family. Non-receptor class subfamily. Phosphorylation at Ser-49 by PKA deactivates PTPN5. Phosphorylation at Thr-59 and Ser-72 by MAPKs stabilizes the phosphatase, dephosphorylation of these sites results in ubiquitin-mediated degradation of the active phosphatase. In terms of tissue distribution, expressed in the central nervous system except in the cerebellum. Enriched within the striatum relative to other brain areas.

The protein resides in the cytoplasm. It catalyses the reaction O-phospho-L-tyrosyl-[protein] + H2O = L-tyrosyl-[protein] + phosphate. In terms of biological role, may regulate the activity of several effector molecules involved in synaptic plasticity and neuronal cell survival, including MAPKs, Src family kinases and NMDA receptors. The sequence is that of Tyrosine-protein phosphatase non-receptor type 5 (Ptpn5) from Rattus norvegicus (Rat).